The following is a 519-amino-acid chain: MRKNPMDVIKKKHWWQSDALKWSVLGLLGLLVGYLVVLMYAQGEYLFAITTLILSSAGLYIFANRKAYAWRYVYPGMAGMGLFVLFPLVCTIAIAFTNYSSTNQLTFERAQEVLLDRSWQAGKIYNFGLYPAGDEWQLALSDGETGKNYLSDAFKFGGEQKLQLKESATQPEGERANLRVITQNRQALSDITAILPDGNKVMMSSLRQFSGTQPLYTLDGDGTLTNNQSGVKYRPNNQIGFYQSITADGNWGDEKLSPGYTVTTGWKNFTRVFTDEGIQKPFLAIFVWTVVFSLITVFLTVAVGMVLACLVQWEALRGKAVYRVLLILPYAVPSFISILIFKGLFNQSFGEINMMLSALFGVKPAWFSDPTTARTMLIIVNTWLGYPYMMILCMGLLKAIPDDLYEASAMDGAGPFQNFFKITLPLLIKPLTPLMIASFAFNFNNFVLIQLLTNGGPDRLGTTTPAGYTDLLVNYTYRIAFEGGGGQDFGLAAAIATLIFLLVGALAIVNLKATRMKFD.

At 1–18 (MRKNPMDVIKKKHWWQSD) the chain is on the cytoplasmic side. A helical transmembrane segment spans residues 19-41 (ALKWSVLGLLGLLVGYLVVLMYA). Topologically, residues 42 to 44 (QGE) are periplasmic. Residues 45 to 62 (YLFAITTLILSSAGLYIF) form a helical membrane-spanning segment. Over 63 to 74 (ANRKAYAWRYVY) the chain is Cytoplasmic. The helical transmembrane segment at 75-97 (PGMAGMGLFVLFPLVCTIAIAFT) threads the bilayer. Topologically, residues 98-288 (NYSSTNQLTF…QKPFLAIFVW (191 aa)) are periplasmic. Residues 286–510 (FVWTVVFSLI…LLVGALAIVN (225 aa)) form the ABC transmembrane type-1 domain. A helical membrane pass occupies residues 289 to 311 (TVVFSLITVFLTVAVGMVLACLV). The Cytoplasmic segment spans residues 312–323 (QWEALRGKAVYR). A helical transmembrane segment spans residues 324 to 346 (VLLILPYAVPSFISILIFKGLFN). Topologically, residues 347 to 374 (QSFGEINMMLSALFGVKPAWFSDPTTAR) are periplasmic. The helical transmembrane segment at 375 to 397 (TMLIIVNTWLGYPYMMILCMGLL) threads the bilayer. Topologically, residues 398–417 (KAIPDDLYEASAMDGAGPFQ) are cytoplasmic. Residues 418–440 (NFFKITLPLLIKPLTPLMIASFA) form a helical membrane-spanning segment. Residues 441-488 (FNFNNFVLIQLLTNGGPDRLGTTTPAGYTDLLVNYTYRIAFEGGGGQD) are Periplasmic-facing. Residues 489 to 511 (FGLAAAIATLIFLLVGALAIVNL) traverse the membrane as a helical segment. The Cytoplasmic segment spans residues 512-519 (KATRMKFD).

This sequence belongs to the binding-protein-dependent transport system permease family. MalFG subfamily. As to quaternary structure, the complex is composed of two ATP-binding proteins (MalK), two transmembrane proteins (MalG and MalF) and a solute-binding protein (MalE).

Its subcellular location is the cell inner membrane. In terms of biological role, part of the ABC transporter complex MalEFGK involved in maltose/maltodextrin import. Probably responsible for the translocation of the substrate across the membrane. The protein is Maltose/maltodextrin transport system permease protein MalF (malF) of Escherichia coli O6:H1 (strain CFT073 / ATCC 700928 / UPEC).